Reading from the N-terminus, the 325-residue chain is Helicase VP6-A (325 aa).

Disordered stretches follow at residues 1–127 (MLLA…NGRR) and 174–230 (EGVA…EPAR). 4 stretches are compositionally biased toward basic and acidic residues: residues 8 to 18 (VIKRSSEELKQ), 32 to 54 (EGGK…KDGE), 61 to 79 (GQKE…DRRI), and 92 to 105 (PGER…RGDG). Residue K106 coordinates ATP. A compositionally biased stretch (gly residues) spans 106 to 122 (KVGGGGGDADAGVGATG). A compositionally biased stretch (basic and acidic residues) spans 175–229 (GVAEQTERSRDLRRKEKNGTHAKAVERGGRKQRKESHGDAQREGVEEEKTSEEPA).

It belongs to the orbivirus VP6 family. As to quaternary structure, homohexamer.

It is found in the virion. It catalyses the reaction ATP + H2O = ADP + phosphate + H(+). ATP dependent RNA helicase essential for RNA packaging and viral transcription. Possesses ss- and dsRNA-binding capacity. The protein is Helicase VP6-A (Segment-9) of Bluetongue virus 13 (isolate USA) (BTV 13).